A 2179-amino-acid chain; its full sequence is Probable inactive serine/threonine-protein kinase lvsG (2179 aa).

The disordered stretch occupies residues 100-167 (DHDLNKNKNN…TSISLNDLNS (68 aa)). Composition is skewed to low complexity over residues 106-121 (NKNN…NNSG) and 141-159 (LSPS…LSTS). A WD 1 repeat occupies 216-256 (LYERSLKTSQQQQQQQQQQFKFQPNETLSLWEYFDEINSPP). Disordered regions lie at residues 281–300 (LDNK…NSQS), 523–556 (DNDN…TVGW), 589–621 (DSMG…NSGK), 778–801 (KSLK…QPQF), 844–959 (NNHH…NKPS), 1033–1055 (AQQQ…SKQL), 1079–1153 (GISK…STTD), 1339–1362 (NHSN…KNGS), and 1785–1807 (TTTT…PNSL). The BEACH domain maps to 463 to 801 (YHQPLENQFE…QQQTQQQPQF (339 aa)). Residues 534–548 (NSSSSNNNNNNNNED) show a composition bias toward low complexity. Residues 590-602 (SMGGGIGSIGSTG) show a composition bias toward gly residues. Composition is skewed to low complexity over residues 783–800 (QRQQ…QQPQ), 853–943 (NSNI…GVNN), 1033–1047 (AQQQ…QQQA), and 1084–1098 (TTNA…TNSN). The stretch at 1021–1049 (LQQQLQQQQQQQAQQQQSQQQSQQQQANS) forms a coiled coil. The Protein kinase domain occupies 1064–1400 (ESMIKKYSNG…VNELLSSSLF (337 aa)). The span at 1099-1122 (MGDSIGNNITSPPSPTSLKDSSSI) shows a compositional bias: polar residues. Low complexity predominate over residues 1123–1134 (QQQQQQQQQQQQ). Residues 1135 to 1153 (NSESTRPITPPNVSNSTTD) show a composition bias toward polar residues. 2 stretches are compositionally biased toward low complexity: residues 1339 to 1360 (NHSN…NNKN) and 1785 to 1801 (TTTT…NNNN). WD repeat units follow at residues 1864 to 1903 (EHNA…SLTT), 1906 to 1942 (QHMH…KVNV), 1945 to 1983 (EPTG…LTHE), 2007 to 2048 (SNSN…ILEQ), 2052 to 2089 (HHDS…PIIS), and 2149 to 2179 (PKQS…KICQ).

It belongs to the protein kinase superfamily. Ser/Thr protein kinase family.

The protein is Probable inactive serine/threonine-protein kinase lvsG (lvsG) of Dictyostelium discoideum (Social amoeba).